The chain runs to 585 residues: MSATSVDQRPKGQGNKVSVQNGSIHQKDAVNDDDFEPYLSSQTNQNNSYPPMSDPYMPSYYAPSIGFPYSLGEAAWSTAGDQPMPYLTTYGQMSNGEHHYIPDGVFSQPGALGNTPPFLGQHGFNFFPGNADFSTWGTSGSQGQSTQNSAYSSSYGYPPSSLGRAITDGQAGFGNDTLSKVPGISSIEQGMTGLKIGGDLTAAVTKTVGTALSSSGMTSIATNNVPPVSSAAPKPTSWAAIARKPAKPQPKLKPKGNVGIGGSAVPPPPIKHNMNIGTWDEKGSVVKAPPTQPVLPPQTIIQQPQPLIQPPPLVQSQLPQQQPQPPQPQQQQGPQPQAQPHQVQSQQPQLQNRWVAPRNRGTGFNQNNGTGSENFGLGVVPVSASPSSVEVHPVLEKLKAINNYNPKDFDWNLKNGRVFIIKSYSEDDIHRSIKYSIWCSTEHGNKRLDAAYRSLNGKGPLYLLFSVNGSGHFCGVAEMKSVVDYNAYAGVWSQDKWKGKFEVKWIFVKDVPNNQLRHIRLENNDNKPVTNSRDTQEVPLEKAKQVLKIIATFKHTTSIFDDFAHYEKRQEEEEAMRRERNRNKQ.

Disordered stretches follow at residues 1–51, 244–277, and 304–350; these read MSAT…SYPP, KPAK…MNIG, and PQPL…QPQL. Ser2 is subject to N-acetylserine. Residues 15–24 show a composition bias toward polar residues; sequence NKVSVQNGSI. Ser23 is subject to Phosphoserine. Positions 244–254 are enriched in basic residues; it reads KPAKPQPKLKP. Low complexity predominate over residues 329-350; that stretch reads QQQQGPQPQAQPHQVQSQQPQL. Residues 416–550 enclose the YTH domain; sequence GRVFIIKSYS…EKAKQVLKII (135 aa). Residues 422–424, Asp428, 438–439, Asn468, Trp492, and Trp497 each bind RNA; these read KSY and WC.

It belongs to the YTHDF family. YTHDF3 subfamily. As to quaternary structure, interacts with CNOT1; promoting recruitment of the CCR4-NOT complex. Interacts with YTHDF1. Interacts with YTHDF2. Interacts with PAN3.

The protein localises to the cytoplasm. Its subcellular location is the cytosol. The protein resides in the P-body. It localises to the stress granule. Functionally, specifically recognizes and binds N6-methyladenosine (m6A)-containing RNAs, and regulates their stability. M6A is a modification present at internal sites of mRNAs and some non-coding RNAs and plays a role in mRNA stability and processing. Acts as a regulator of mRNA stability by promoting degradation of m6A-containing mRNAs via interaction with the CCR4-NOT complex or PAN3. The YTHDF paralogs (YTHDF1, YTHDF2 and YTHDF3) share m6A-containing mRNAs targets and act redundantly to mediate mRNA degradation and cellular differentiation. Acts as a negative regulator of type I interferon response by down-regulating interferon-stimulated genes (ISGs) expression: acts by binding to FOXO3 mRNAs. Binds to FOXO3 mRNAs independently of METTL3-mediated m6A modification. Can also act as a regulator of mRNA stability in cooperation with YTHDF2 by binding to m6A-containing mRNA and promoting their degradation. Recognizes and binds m6A-containing circular RNAs (circRNAs); circRNAs are generated through back-splicing of pre-mRNAs, a non-canonical splicing process promoted by dsRNA structures across circularizing exons. Promotes formation of phase-separated membraneless compartments, such as P-bodies or stress granules, by undergoing liquid-liquid phase separation upon binding to mRNAs containing multiple m6A-modified residues: polymethylated mRNAs act as a multivalent scaffold for the binding of YTHDF proteins, juxtaposing their disordered regions and thereby leading to phase separation. The resulting mRNA-YTHDF complexes then partition into different endogenous phase-separated membraneless compartments, such as P-bodies, stress granules or neuronal RNA granules. May also recognize and bind N1-methyladenosine (m1A)-containing mRNAs: inhibits trophoblast invasion by binding to m1A-methylated transcripts of IGF1R, promoting their degradation. The chain is YTH domain-containing family protein 3 from Mus musculus (Mouse).